The following is a 312-amino-acid chain: MGRCRVLVVGGTGYIGKRIVKASIEHGHDTYVLKRPETGLDIEKFQLLLSFKKQGAHLVEASFSDHESLVRAVKLVDVVICTVSGAHSRSLLLQLKLVEAIKEAGNVKRFIPSEFGMDPARMGDALEPGRETFDLKMVVRKAIEDANIPHTYISANCFGGYFVGNLSQLGPLTPPSDKVTIYGDGNVKVVYMDEDDVATYTIMTIEDDRTLNKTMYFRPPENVITHRQLVETWEKLSGNQLQKTELSSQDFLALMEGKDVAEQIVIGHLYHIYYEGCLTNFDIDADQDQVEASSLYPEVEYTRMKDYLMIYL.

Residues 10-16, Arg-35, and Lys-44 each bind NADP(+); that span reads GGTGYIG. Lys-136 (proton acceptor) is an active-site residue. Arg-140 contributes to the NADP(+) binding site. His-268 provides a ligand contact to substrate.

Belongs to the NmrA-type oxidoreductase family. Isoflavone reductase subfamily. In terms of assembly, dimer. As to expression, expressed in seed coats, but not in embryos, leaves, stems and roots.

Reductase involved in lignan biosynthesis. Catalyzes the sequential conversion of pinoresinol into lariciresinol and of lariciresinol into secoisolariciresinol. Abstracts the 4R-hydride from the NADPH cofactor during catalysis. This chain is Bifunctional pinoresinol-lariciresinol reductase, found in Linum usitatissimum (Flax).